A 712-amino-acid polypeptide reads, in one-letter code: Patatin-like phospholipase domain-containing protein ACLA_029670 (712 aa).

A compositionally biased stretch (polar residues) spans 1–10 (MTSAEKSATR). The tract at residues 1–20 (MTSAEKSATRNIYDPSALPD) is disordered. The chain crosses the membrane as a helical span at residues 85-105 (WPFLFIVFAWITVLGIAYALT). Residues 275–466 (LCLSGGATFA…RTDIPIKALN (192 aa)) enclose the PNPLA domain. The short motif at 306–310 (GTSGG) is the GXSXG element. The active-site Nucleophile is S308. Catalysis depends on D453, which acts as the Proton acceptor. The span at 649–664 (FPERHSDYKDESHYTE) shows a compositional bias: basic and acidic residues. The tract at residues 649–686 (FPERHSDYKDESHYTEVSDSLSTNSSRPHTPDARRGSI) is disordered. The segment covering 665-676 (VSDSLSTNSSRP) has biased composition (polar residues). Residues 677-686 (HTPDARRGSI) show a composition bias toward basic and acidic residues.

It belongs to the PLPL family.

It localises to the membrane. In terms of biological role, probable lipid hydrolase. This chain is Patatin-like phospholipase domain-containing protein ACLA_029670, found in Aspergillus clavatus (strain ATCC 1007 / CBS 513.65 / DSM 816 / NCTC 3887 / NRRL 1 / QM 1276 / 107).